A 521-amino-acid chain; its full sequence is Cytochrome P450 1A1 (521 aa).

Phenylalanine 229 lines the substrate pocket. Cysteine 463 serves as a coordination point for heme.

The protein belongs to the cytochrome P450 family. Requires heme as cofactor.

It is found in the endoplasmic reticulum membrane. The protein localises to the microsome membrane. The catalysed reaction is an organic molecule + reduced [NADPH--hemoprotein reductase] + O2 = an alcohol + oxidized [NADPH--hemoprotein reductase] + H2O + H(+). In terms of biological role, cytochromes P450 are a group of heme-thiolate monooxygenases. They oxidize a variety of structurally unrelated compounds, including steroids, fatty acids, and xenobiotics. The protein is Cytochrome P450 1A1 (cyp1a1) of Chelon auratus (Golden grey mullet).